The following is a 294-amino-acid chain: Ribosomal protein L11 methyltransferase (294 aa).

Residues Thr144, Gly165, Asp187, and Asn229 each coordinate S-adenosyl-L-methionine.

The protein belongs to the methyltransferase superfamily. PrmA family.

The protein localises to the cytoplasm. The enzyme catalyses L-lysyl-[protein] + 3 S-adenosyl-L-methionine = N(6),N(6),N(6)-trimethyl-L-lysyl-[protein] + 3 S-adenosyl-L-homocysteine + 3 H(+). Methylates ribosomal protein L11. The polypeptide is Ribosomal protein L11 methyltransferase (Pseudomonas paraeruginosa (strain DSM 24068 / PA7) (Pseudomonas aeruginosa (strain PA7))).